The sequence spans 5121 residues: Hydrocephalus-inducing protein homolog (5121 aa).

An interaction with KIF9 region spans residues 363-754 (EFFEECITDP…VLFSSPTPSG (392 aa)). Positions 956-967 (LSKKGRVKKGHA) are enriched in basic residues. 7 disordered regions span residues 956-987 (LSKK…SPVF), 1925-1951 (LAQE…TSLS), 2155-2186 (SKAD…LPPG), 2333-2459 (EQER…KFKT), 2482-2534 (LPPA…AERE), 2664-2684 (TNTT…KQKM), and 3852-3874 (KPDH…TGST). A coiled-coil region spans residues 1908 to 1933 (EIKKSKEEQMRAKYLENLAQENEEED). A compositionally biased stretch (polar residues) spans 1936–1951 (SSDQGTSNSTKRTSLS). Residues 2267–2365 (AQDYAAMKAQ…EDELKRRVKK (99 aa)) adopt a coiled-coil conformation. 5 stretches are compositionally biased toward basic and acidic residues: residues 2333-2360 (EQER…DELK), 2393-2418 (VDVK…EELN), 2444-2453 (DNSKDPDKQL), 2489-2498 (EAPHEPDDQR), and 2509-2534 (KDRE…AERE). Residues 2504-2549 (GRRGRKDRERERLEKERTEKERLEREKAERERLEKLRALEERSDWE) are a coiled coil. 2 stretches are compositionally biased toward polar residues: residues 2664 to 2679 (TNTT…SSKG) and 3857 to 3874 (GSAQ…TGST).

In terms of assembly, interacts with KIF9.

It localises to the cell projection. It is found in the cilium. The protein resides in the cytoplasm. The protein localises to the cytoskeleton. Its subcellular location is the cilium axoneme. It localises to the flagellum. Functionally, required for ciliary motility. This is Hydrocephalus-inducing protein homolog (HYDIN) from Homo sapiens (Human).